Consider the following 217-residue polypeptide: Phosphatidylserine decarboxylase proenzyme (217 aa).

Catalysis depends on Ser-183, which acts as the Schiff-base intermediate with substrate; via pyruvic acid. Position 183 is a pyruvic acid (Ser); by autocatalysis (Ser-183).

It belongs to the phosphatidylserine decarboxylase family. PSD-A subfamily. In terms of assembly, heterodimer of a large membrane-associated beta subunit and a small pyruvoyl-containing alpha subunit. Requires pyruvate as cofactor. In terms of processing, is synthesized initially as an inactive proenzyme. Formation of the active enzyme involves a self-maturation process in which the active site pyruvoyl group is generated from an internal serine residue via an autocatalytic post-translational modification. Two non-identical subunits are generated from the proenzyme in this reaction, and the pyruvate is formed at the N-terminus of the alpha chain, which is derived from the carboxyl end of the proenzyme. The post-translation cleavage follows an unusual pathway, termed non-hydrolytic serinolysis, in which the side chain hydroxyl group of the serine supplies its oxygen atom to form the C-terminus of the beta chain, while the remainder of the serine residue undergoes an oxidative deamination to produce ammonia and the pyruvoyl prosthetic group on the alpha chain.

Its subcellular location is the cell membrane. It catalyses the reaction a 1,2-diacyl-sn-glycero-3-phospho-L-serine + H(+) = a 1,2-diacyl-sn-glycero-3-phosphoethanolamine + CO2. Its pathway is phospholipid metabolism; phosphatidylethanolamine biosynthesis; phosphatidylethanolamine from CDP-diacylglycerol: step 2/2. Functionally, catalyzes the formation of phosphatidylethanolamine (PtdEtn) from phosphatidylserine (PtdSer). The sequence is that of Phosphatidylserine decarboxylase proenzyme from Cupriavidus pinatubonensis (strain JMP 134 / LMG 1197) (Cupriavidus necator (strain JMP 134)).